Reading from the N-terminus, the 485-residue chain is dTDP-4-amino-4,6-dideoxy-D-glucose ammonia-lyase (485 aa).

Residues cysteine 141, cysteine 145, and cysteine 148 each coordinate [4Fe-4S] cluster.

Belongs to the radical SAM superfamily. DesII family. As to quaternary structure, monomer. [4Fe-4S] cluster is required as a cofactor.

The catalysed reaction is dTDP-4-amino-4,6-dideoxy-alpha-D-glucose + AH2 + S-adenosyl-L-methionine = dTDP-3-dehydro-4,6-dideoxy-alpha-D-glucose + 5'-deoxyadenosine + L-methionine + A + NH4(+) + H(+). Involved in the biosynthesis of dTDP-alpha-D-desosamine, a sugar found in several bacterial macrolide antibiotics. Catalyzes the SAM-dependent deamination of dTDP-4-amino-4,6-deoxyglucose (dTDP-viosamine) to yield dTDP-3-keto-4,6-deoxyglucose. It can also catalyze the oxidative dehydrogenation of the non-physiological substrate dTDP-D-quinovose to dTDP-3-keto-6-deoxy-d-glucose. It can also deaminate dTDP-3-amino-3,6-deoxyglucose. In Streptomyces venezuelae, this protein is dTDP-4-amino-4,6-dideoxy-D-glucose ammonia-lyase.